A 160-amino-acid polypeptide reads, in one-letter code: Tumor suppressor ARF (160 aa).

The interval 1–63 (MGRRFVVTVR…RRGPQPHPGP (63 aa)) is interaction with CDK5RAP3 and MDM2. 2 disordered regions span residues 49–74 (PERI…QSGS) and 90–116 (HPLP…GRGA).

In terms of assembly, does not interact with cyclins, CDK1, CDK2, CDK4, CDK5 or CDK6. Binds to BCL6, E2F1, HUWE1, MDM2, MYC, NPM1/B23, TOP1/TOPOI and UBE2I/UBC9. Interacts with TBRG1 and COMMD1. Interacts with CDKN2AIP and E4F1. Interacts with CDK5RAP3 and MDM2; form a ternary complex involved in regulation of p53/TP53. Interacts with NOP53; the interaction is direct and promotes ARF nucleoplasmic relocalization and ubiquitin-mediated proteasomal degradation. Interacts with TTF1 (via the N-terminal region (NRD) and a C-terminal region); the interaction is direct and inhibits the nucleolar localization of TTF1. Post-translationally, ubiquitinated in normal cells by TRIP12 via the ubiquitin fusion degradation (UFD) pathway, a process that mediates ubiquitination at the N-terminus, regardless of the absence of lysine residues. Ubiquitination leads to its proteasomal degradation. In cancer cells, however, TRIP12 is located in a different cell compartment, preventing ubiquitination and degradation. Widely expressed with very low levels in kidney and colon.

The protein localises to the nucleus. Its subcellular location is the nucleolus. It is found in the nucleoplasm. Capable of inducing cell cycle arrest in G1 and G2 phases. Acts as a tumor suppressor. Binds to MDM2 and blocks its nucleocytoplasmic shuttling by sequestering it in the nucleolus. This inhibits the oncogenic action of MDM2 by blocking MDM2-induced degradation of p53 and enhancing p53-dependent transactivation and apoptosis. Also induces G2 arrest and apoptosis in a p53-independent manner by preventing the activation of cyclin B1/CDC2 complexes. Binds to BCL6 and down-regulates BCL6-induced transcriptional repression. Binds to E2F1 and MYC and blocks their transcriptional activator activity but has no effect on MYC transcriptional repression. Binds to TOP1/TOPOI and stimulates its activity. This complex binds to rRNA gene promoters and may play a role in rRNA transcription and/or maturation. Interacts with NPM1/B23 and promotes its polyubiquitination and degradation, thus inhibiting rRNA processing. Plays a role in inhibiting ribosome biogenesis, perhaps by binding to the nucleolar localization sequence of transcription termination factor TTF1, and thereby preventing nucleolar localization of TTF1. Interacts with COMMD1 and promotes its 'Lys63'-linked polyubiquitination. Interacts with UBE2I/UBC9 and enhances sumoylation of a number of its binding partners including MDM2 and E2F1. Binds to HUWE1 and represses its ubiquitin ligase activity. May play a role in controlling cell proliferation and apoptosis during mammary gland development. The chain is Tumor suppressor ARF from Rattus norvegicus (Rat).